The chain runs to 152 residues: Large ribosomal subunit protein uL15 (152 aa).

The disordered stretch occupies residues methionine 1–methionine 57. Over residues serine 14–arginine 23 the composition is skewed to basic residues. Positions isoleucine 25–methionine 37 are enriched in gly residues.

Belongs to the universal ribosomal protein uL15 family. In terms of assembly, part of the 50S ribosomal subunit.

Functionally, binds to the 23S rRNA. This is Large ribosomal subunit protein uL15 from Prochlorococcus marinus (strain MIT 9301).